Consider the following 252-residue polypeptide: Receptor expression-enhancing protein 2 (252 aa).

2 helical membrane passes run 1–21 (MVSW…YPAY) and 35–55 (YVKW…ETLT). Ser150 carries the phosphoserine modification. Positions 165–252 (LQRPDGRLRP…KKTSGGGDSA (88 aa)) are disordered. Over residues 203–217 (SRTEASEDDMGDKAP) the composition is skewed to basic and acidic residues.

This sequence belongs to the DP1 family. In terms of assembly, interacts with odorant receptor proteins. As to expression, detected in brain, heart and skeletal muscle, and at low levels in placenta, kidney and pancreas. Expressed in circumvallate papillae.

The protein resides in the membrane. Its function is as follows. Required for endoplasmic reticulum (ER) network formation, shaping and remodeling. May enhance the cell surface expression of odorant receptors. This is Receptor expression-enhancing protein 2 (REEP2) from Homo sapiens (Human).